The sequence spans 116 residues: Large ribosomal subunit protein bL19 (116 aa).

Belongs to the bacterial ribosomal protein bL19 family.

This protein is located at the 30S-50S ribosomal subunit interface and may play a role in the structure and function of the aminoacyl-tRNA binding site. The polypeptide is Large ribosomal subunit protein bL19 (Staphylococcus aureus (strain Mu3 / ATCC 700698)).